The following is a 646-amino-acid chain: Serine/threonine-protein kinase PLK3 (646 aa).

Residues 1–35 (MEPAAGFLSPRPFQRAAAAPAPPAGPGPPPSALRG) form a disordered region. The segment covering 10-19 (PRPFQRAAAA) has biased composition (low complexity). The span at 20–31 (PAPPAGPGPPPS) shows a compositional bias: pro residues. The Protein kinase domain maps to 62–314 (YLKGRLLGKG…IDQILRHDFF (253 aa)). Residues 68–76 (LGKGGFARC) and Lys-91 contribute to the ATP site. The Proton acceptor role is filled by Asp-185. A disordered region spans residues 381–417 (GHQDARPEAPAASGPAPVSLVETAPEDSSPRGTLASS). POLO box domains follow at residues 463–541 (WVSK…YMEQ) and 562–645 (LLLQ…DRSP).

It belongs to the protein kinase superfamily. Ser/Thr protein kinase family. CDC5/Polo subfamily. As to quaternary structure, interacts (via the POLO-box domain) with CIB1; leading to inhibit PLK3 kinase activity. Interacts with GOLGB1. In terms of processing, phosphorylated in an ATM-dependent manner following DNA damage. Phosphorylated as cells enter mitosis and dephosphorylated as cells exit mitosis. As to expression, transcripts are highly detected in placenta, lung, followed by skeletal muscle, heart, pancreas, ovaries and kidney and weakly detected in liver and brain. May have a short half-live. In cells of hematopoietic origin, strongly and exclusively detected in terminally differentiated macrophages. Transcript expression appears to be down-regulated in primary lung tumor.

It is found in the cytoplasm. The protein localises to the nucleus. The protein resides in the nucleolus. Its subcellular location is the golgi apparatus. It localises to the cytoskeleton. It is found in the microtubule organizing center. The protein localises to the centrosome. It carries out the reaction L-seryl-[protein] + ATP = O-phospho-L-seryl-[protein] + ADP + H(+). The catalysed reaction is L-threonyl-[protein] + ATP = O-phospho-L-threonyl-[protein] + ADP + H(+). Its function is as follows. Serine/threonine-protein kinase involved in cell cycle regulation, response to stress and Golgi disassembly. Polo-like kinases act by binding and phosphorylating proteins that are already phosphorylated on a specific motif recognized by the POLO box domains. Phosphorylates ATF2, BCL2L1, CDC25A, CDC25C, CHEK2, HIF1A, JUN, p53/TP53, p73/TP73, PTEN, TOP2A and VRK1. Involved in cell cycle regulation: required for entry into S phase and cytokinesis. Phosphorylates BCL2L1, leading to regulate the G2 checkpoint and progression to cytokinesis during mitosis. Plays a key role in response to stress: rapidly activated upon stress stimulation, such as ionizing radiation, reactive oxygen species (ROS), hyperosmotic stress, UV irradiation and hypoxia. Involved in DNA damage response and G1/S transition checkpoint by phosphorylating CDC25A, p53/TP53 and p73/TP73. Phosphorylates p53/TP53 in response to reactive oxygen species (ROS), thereby promoting p53/TP53-mediated apoptosis. Phosphorylates CHEK2 in response to DNA damage, promoting the G2/M transition checkpoint. Phosphorylates the transcription factor p73/TP73 in response to DNA damage, leading to inhibit p73/TP73-mediated transcriptional activation and pro-apoptotic functions. Phosphorylates HIF1A and JUN is response to hypoxia. Phosphorylates ATF2 following hyperosmotic stress in corneal epithelium. Also involved in Golgi disassembly during the cell cycle: part of a MEK1/MAP2K1-dependent pathway that induces Golgi fragmentation during mitosis by mediating phosphorylation of VRK1. May participate in endomitotic cell cycle, a form of mitosis in which both karyokinesis and cytokinesis are interrupted and is a hallmark of megakaryocyte differentiation, via its interaction with CIB1. In Homo sapiens (Human), this protein is Serine/threonine-protein kinase PLK3 (PLK3).